The primary structure comprises 515 residues: NADH-quinone oxidoreductase subunit N (515 aa).

Transmembrane regions (helical) follow at residues 14-34 (ITPILVILGAACLGVLVEAFL), 40-60 (WSAQVGLSLLALVAAGVALAL), 80-100 (APTLFLWGTLLALGLGAILLI), 138-158 (TEVFPLALFALGGMMVFCAAN), 160-180 (LLTMFIALEVLSLPLYLMCGL), 195-215 (YFLLGAFASAFFLYGLALLYG), 239-259 (LFAGLGLLVVGLLFKASVGPF), 271-291 (PTAVTGFMAACTKVAAFGGIL), 307-327 (GVLYAVAIVSMAIGVVLGLTQ), 333-353 (MIAYSSVAHAGFLLVGSIALT), 361-381 (MFYLLAYGFTTIAIFGVISLV), 404-424 (VAWVFTFLLLALAGIPMTSGF), 438-458 (GMAPLVVVALVASAVAAFFYL), and 485-505 (AAITLGVVVTLLLGVLPSLAL).

It belongs to the complex I subunit 2 family. NDH-1 is composed of 14 different subunits. Subunits NuoA, H, J, K, L, M, N constitute the membrane sector of the complex.

The protein localises to the cell membrane. It carries out the reaction a quinone + NADH + 5 H(+)(in) = a quinol + NAD(+) + 4 H(+)(out). Functionally, NDH-1 shuttles electrons from NADH, via FMN and iron-sulfur (Fe-S) centers, to quinones in the respiratory chain. The immediate electron acceptor for the enzyme in this species is believed to be a menaquinone. Couples the redox reaction to proton translocation (for every two electrons transferred, four hydrogen ions are translocated across the cytoplasmic membrane), and thus conserves the redox energy in a proton gradient. In Saccharopolyspora erythraea (strain ATCC 11635 / DSM 40517 / JCM 4748 / NBRC 13426 / NCIMB 8594 / NRRL 2338), this protein is NADH-quinone oxidoreductase subunit N.